The sequence spans 78 residues: Large ribosomal subunit protein bL28 (78 aa).

The protein belongs to the bacterial ribosomal protein bL28 family.

The sequence is that of Large ribosomal subunit protein bL28 from Prochlorococcus marinus (strain MIT 9215).